Reading from the N-terminus, the 243-residue chain is Pyridoxine 5'-phosphate synthase (243 aa).

Asn7 contributes to the 3-amino-2-oxopropyl phosphate binding site. 9-10 is a 1-deoxy-D-xylulose 5-phosphate binding site; the sequence is DH. Arg18 contributes to the 3-amino-2-oxopropyl phosphate binding site. His43 acts as the Proton acceptor in catalysis. Residues Arg45 and His50 each coordinate 1-deoxy-D-xylulose 5-phosphate. Glu70 serves as the catalytic Proton acceptor. Thr100 is a binding site for 1-deoxy-D-xylulose 5-phosphate. His190 (proton donor) is an active-site residue. Residues Gly191 and 212–213 each bind 3-amino-2-oxopropyl phosphate; that span reads GH.

The protein belongs to the PNP synthase family. Homooctamer; tetramer of dimers.

It is found in the cytoplasm. The catalysed reaction is 3-amino-2-oxopropyl phosphate + 1-deoxy-D-xylulose 5-phosphate = pyridoxine 5'-phosphate + phosphate + 2 H2O + H(+). It participates in cofactor biosynthesis; pyridoxine 5'-phosphate biosynthesis; pyridoxine 5'-phosphate from D-erythrose 4-phosphate: step 5/5. Its function is as follows. Catalyzes the complicated ring closure reaction between the two acyclic compounds 1-deoxy-D-xylulose-5-phosphate (DXP) and 3-amino-2-oxopropyl phosphate (1-amino-acetone-3-phosphate or AAP) to form pyridoxine 5'-phosphate (PNP) and inorganic phosphate. The chain is Pyridoxine 5'-phosphate synthase from Prochlorococcus marinus (strain MIT 9211).